The primary structure comprises 143 residues: Anti-sigma F factor (143 aa).

Belongs to the anti-sigma-factor family.

It catalyses the reaction L-seryl-[protein] + ATP = O-phospho-L-seryl-[protein] + ADP + H(+). It carries out the reaction L-threonyl-[protein] + ATP = O-phospho-L-threonyl-[protein] + ADP + H(+). Binds to sigma F and blocks its ability to form an RNA polymerase holoenzyme (E-sigma F). Phosphorylates SpoIIAA on a serine residue. This phosphorylation may enable SpoIIAA to act as an anti-anti-sigma factor that counteracts SpoIIAB and thus releases sigma F from inhibition. This Clostridium novyi (strain NT) protein is Anti-sigma F factor.